Here is a 191-residue protein sequence, read N- to C-terminus: Protein GrpE (191 aa).

Basic and acidic residues-rich tracts occupy residues 1-19 (MKDE…EPES) and 29-45 (QQGE…GEIK). A disordered region spans residues 1 to 45 (MKDEHNQEHDHLSPKEPESYQKAYACKEQQGEEKQEASEKEGEIK).

This sequence belongs to the GrpE family. As to quaternary structure, homodimer.

It is found in the cytoplasm. Functionally, participates actively in the response to hyperosmotic and heat shock by preventing the aggregation of stress-denatured proteins, in association with DnaK and GrpE. It is the nucleotide exchange factor for DnaK and may function as a thermosensor. Unfolded proteins bind initially to DnaJ; upon interaction with the DnaJ-bound protein, DnaK hydrolyzes its bound ATP, resulting in the formation of a stable complex. GrpE releases ADP from DnaK; ATP binding to DnaK triggers the release of the substrate protein, thus completing the reaction cycle. Several rounds of ATP-dependent interactions between DnaJ, DnaK and GrpE are required for fully efficient folding. This chain is Protein GrpE, found in Helicobacter pylori (strain J99 / ATCC 700824) (Campylobacter pylori J99).